Consider the following 192-residue polypeptide: Orotate phosphoribosyltransferase (192 aa).

Glutamate 116–serine 124 is a 5-phospho-alpha-D-ribose 1-diphosphate binding site. Residues threonine 120 and arginine 148 each coordinate orotate.

Belongs to the purine/pyrimidine phosphoribosyltransferase family. PyrE subfamily. As to quaternary structure, homodimer. Mg(2+) serves as cofactor.

It catalyses the reaction orotidine 5'-phosphate + diphosphate = orotate + 5-phospho-alpha-D-ribose 1-diphosphate. The protein operates within pyrimidine metabolism; UMP biosynthesis via de novo pathway; UMP from orotate: step 1/2. Its function is as follows. Catalyzes the transfer of a ribosyl phosphate group from 5-phosphoribose 1-diphosphate to orotate, leading to the formation of orotidine monophosphate (OMP). The chain is Orotate phosphoribosyltransferase from Bartonella quintana (strain Toulouse) (Rochalimaea quintana).